Consider the following 374-residue polypeptide: tRNA (guanine(26)-N(2))-dimethyltransferase (374 aa).

The region spanning 4–371 is the Trm1 methyltransferase domain; that stretch reads IEIREGKASL…KEIDEIVNCI (368 aa). S-adenosyl-L-methionine is bound by residues arginine 44, arginine 69, aspartate 87, aspartate 113, and alanine 114. Residues cysteine 244, cysteine 247, cysteine 261, and cysteine 264 each coordinate Zn(2+).

This sequence belongs to the class I-like SAM-binding methyltransferase superfamily. Trm1 family.

It catalyses the reaction guanosine(26) in tRNA + 2 S-adenosyl-L-methionine = N(2)-dimethylguanosine(26) in tRNA + 2 S-adenosyl-L-homocysteine + 2 H(+). Functionally, dimethylates a single guanine residue at position 26 of a number of tRNAs using S-adenosyl-L-methionine as donor of the methyl groups. The protein is tRNA (guanine(26)-N(2))-dimethyltransferase of Sulfurisphaera tokodaii (strain DSM 16993 / JCM 10545 / NBRC 100140 / 7) (Sulfolobus tokodaii).